A 255-amino-acid chain; its full sequence is tRNA (guanine-N(7)-)-methyltransferase (255 aa).

The disordered stretch occupies residues M1–W29. E86, E111, D138, and D160 together coordinate S-adenosyl-L-methionine. Residue D160 is part of the active site. Substrate contacts are provided by residues K164, D196, and T233–E236.

This sequence belongs to the class I-like SAM-binding methyltransferase superfamily. TrmB family.

The catalysed reaction is guanosine(46) in tRNA + S-adenosyl-L-methionine = N(7)-methylguanosine(46) in tRNA + S-adenosyl-L-homocysteine. It participates in tRNA modification; N(7)-methylguanine-tRNA biosynthesis. In terms of biological role, catalyzes the formation of N(7)-methylguanine at position 46 (m7G46) in tRNA. This Ruegeria sp. (strain TM1040) (Silicibacter sp.) protein is tRNA (guanine-N(7)-)-methyltransferase.